We begin with the raw amino-acid sequence, 298 residues long: CD-NTase-associated protein 6 (298 aa).

ATP contacts are provided by residues 80 to 85 (GTGKTA) and 204 to 205 (RR).

It belongs to the AAA ATPase family. In terms of assembly, homohexamer, forms a 1:1:6 CdnC:Cap7:Cap6 complex.

Functionally, regulates complex assembly in a CBASS antivirus system. CBASS (cyclic oligonucleotide-based antiphage signaling system) provides immunity against bacteriophage. The CD-NTase protein synthesizes cyclic nucleotides in response to infection; these serve as specific second messenger signals. The signals activate a diverse range of effectors, leading to bacterial cell death and thus abortive phage infection. A type III CBASS system. Expression of this CBASS system (Cap18-Cap6-Cap7-CdnC-CapW-Cap17) in a susceptible E.coli (strain MG1655) confers resistance to bacteriophage P1. Binds and disassembles an active CdnC:Cap7 complex, inhibiting the complex's ability to synthesize cyclic nucleotide second messengers. An AAA+-ATPase remodeler, in the absence of foreign threat Cap6 probably maintains the Cap7 protein in its open, inactive state. Once activated (presumably by a bacteriophage protein) Cap7 binds to and activates its cognate CD-NTase (CdnC in this bacteria) to synthesize a cyclic nucleotide second messenger which leads to abortive phage infection. The polypeptide is CD-NTase-associated protein 6 (Escherichia coli (strain KTE188)).